Reading from the N-terminus, the 185-residue chain is Ribosome-recycling factor (185 aa).

Belongs to the RRF family.

Its subcellular location is the cytoplasm. Responsible for the release of ribosomes from messenger RNA at the termination of protein biosynthesis. May increase the efficiency of translation by recycling ribosomes from one round of translation to another. The sequence is that of Ribosome-recycling factor from Frankia casuarinae (strain DSM 45818 / CECT 9043 / HFP020203 / CcI3).